The chain runs to 125 residues: Small ribosomal subunit protein uS13 (125 aa).

The disordered stretch occupies residues 90–125; that stretch reads QRHRKGLPVRGQRTKTNARTRKGPKRTVAGKKKATK.

It belongs to the universal ribosomal protein uS13 family. As to quaternary structure, part of the 30S ribosomal subunit. Forms a loose heterodimer with protein S19. Forms two bridges to the 50S subunit in the 70S ribosome.

Its function is as follows. Located at the top of the head of the 30S subunit, it contacts several helices of the 16S rRNA. In the 70S ribosome it contacts the 23S rRNA (bridge B1a) and protein L5 of the 50S subunit (bridge B1b), connecting the 2 subunits; these bridges are implicated in subunit movement. Contacts the tRNAs in the A and P-sites. The protein is Small ribosomal subunit protein uS13 of Bifidobacterium adolescentis (strain ATCC 15703 / DSM 20083 / NCTC 11814 / E194a).